Reading from the N-terminus, the 141-residue chain is ATP synthase epsilon chain (141 aa).

The protein belongs to the ATPase epsilon chain family. In terms of assembly, F-type ATPases have 2 components, CF(1) - the catalytic core - and CF(0) - the membrane proton channel. CF(1) has five subunits: alpha(3), beta(3), gamma(1), delta(1), epsilon(1). CF(0) has three main subunits: a, b and c.

Its subcellular location is the cell inner membrane. Produces ATP from ADP in the presence of a proton gradient across the membrane. In Burkholderia cenocepacia (strain ATCC BAA-245 / DSM 16553 / LMG 16656 / NCTC 13227 / J2315 / CF5610) (Burkholderia cepacia (strain J2315)), this protein is ATP synthase epsilon chain.